The sequence spans 336 residues: Holliday junction branch migration complex subunit RuvB (336 aa).

Positions 4-184 (ADRLIQPQVI…FGIPLRLEFY (181 aa)) are large ATPase domain (RuvB-L). ATP is bound by residues R24, G65, K68, T69, T70, 131–133 (EDY), R174, Y184, and R221. T69 is a Mg(2+) binding site. A small ATPAse domain (RuvB-S) region spans residues 185 to 255 (NIKDLSTIVI…VAELALDMLD (71 aa)). Residues 258 to 336 (AEGFDYMDRK…HFNLIQPEAK (79 aa)) are head domain (RuvB-H). Residues R294, R313, and R318 each coordinate DNA.

It belongs to the RuvB family. Homohexamer. Forms an RuvA(8)-RuvB(12)-Holliday junction (HJ) complex. HJ DNA is sandwiched between 2 RuvA tetramers; dsDNA enters through RuvA and exits via RuvB. An RuvB hexamer assembles on each DNA strand where it exits the tetramer. Each RuvB hexamer is contacted by two RuvA subunits (via domain III) on 2 adjacent RuvB subunits; this complex drives branch migration. In the full resolvosome a probable DNA-RuvA(4)-RuvB(12)-RuvC(2) complex forms which resolves the HJ.

The protein resides in the cytoplasm. The catalysed reaction is ATP + H2O = ADP + phosphate + H(+). Functionally, the RuvA-RuvB-RuvC complex processes Holliday junction (HJ) DNA during genetic recombination and DNA repair, while the RuvA-RuvB complex plays an important role in the rescue of blocked DNA replication forks via replication fork reversal (RFR). RuvA specifically binds to HJ cruciform DNA, conferring on it an open structure. The RuvB hexamer acts as an ATP-dependent pump, pulling dsDNA into and through the RuvAB complex. RuvB forms 2 homohexamers on either side of HJ DNA bound by 1 or 2 RuvA tetramers; 4 subunits per hexamer contact DNA at a time. Coordinated motions by a converter formed by DNA-disengaged RuvB subunits stimulates ATP hydrolysis and nucleotide exchange. Immobilization of the converter enables RuvB to convert the ATP-contained energy into a lever motion, pulling 2 nucleotides of DNA out of the RuvA tetramer per ATP hydrolyzed, thus driving DNA branch migration. The RuvB motors rotate together with the DNA substrate, which together with the progressing nucleotide cycle form the mechanistic basis for DNA recombination by continuous HJ branch migration. Branch migration allows RuvC to scan DNA until it finds its consensus sequence, where it cleaves and resolves cruciform DNA. The chain is Holliday junction branch migration complex subunit RuvB from Shewanella piezotolerans (strain WP3 / JCM 13877).